The sequence spans 1329 residues: Putative protein tag-53 (1329 aa).

Residues 65–92 (SCDKPCYNGVCLNKACVCSKGWYGSQCD) enclose the EGF-like 1 domain. 5 disulfides stabilise this stretch: cysteine 66–cysteine 75, cysteine 70–cysteine 80, cysteine 82–cysteine 91, cysteine 94–cysteine 120, and cysteine 144–cysteine 166. The 110-residue stretch at 94–203 (CFGRIRISDN…NGFNVSYESN (110 aa)) folds into the CUB domain. An N-linked (GlcNAc...) asparagine glycan is attached at asparagine 103. Residues asparagine 197 and asparagine 208 are each glycosylated (N-linked (GlcNAc...) asparagine). EGF-like domains are found at residues 204–232 (RCAYNCSNHGSCLNGKCDCEDGYKGLNCE) and 235–270 (VCQLSGKSTESPCHEGQCVDGRCECLSARVHGETCQ). Intrachain disulfides connect cysteine 205/cysteine 215, cysteine 209/cysteine 220, cysteine 222/cysteine 231, cysteine 236/cysteine 252, cysteine 247/cysteine 257, and cysteine 259/cysteine 269. Kelch repeat units follow at residues 302-353 (VVWS…KYKN), 355-408 (LYMF…VAGH), 416-463 (EMFV…AVEY), 471-518 (AILV…YLNG), 520-575 (MVVV…VIGQ), and 577-619 (LYAL…KCVF). Asparagine 324, asparagine 395, asparagine 447, asparagine 481, asparagine 529, and asparagine 555 each carry an N-linked (GlcNAc...) asparagine glycan. Asparagine 820 carries N-linked (GlcNAc...) asparagine glycosylation. An N-linked (GlcNAc...) asparagine; atypical glycan is attached at asparagine 832. N-linked (GlcNAc...) asparagine glycosylation is found at asparagine 833 and asparagine 934. Intrachain disulfides connect cysteine 945-cysteine 953, cysteine 947-cysteine 968, cysteine 971-cysteine 980, cysteine 983-cysteine 997, cysteine 1000-cysteine 1009, cysteine 1002-cysteine 1016, cysteine 1018-cysteine 1028, and cysteine 1031-cysteine 1045. 2 consecutive Laminin EGF-like domains span residues 945–999 (CQCN…VCSP) and 1000–1047 (CDCH…PCFY). The EGF-like 4 domain occupies 952–998 (TCFTSVGSFPPVTIEKCQSCQNHTTGAHCERCAPGFYGDARNGGVCS). Residue asparagine 973 is glycosylated (N-linked (GlcNAc...) asparagine). Residues asparagine 1066, asparagine 1102, and asparagine 1147 are each glycosylated (N-linked (GlcNAc...) asparagine). The chain crosses the membrane as a helical span at residues 1176–1196 (VLFFVIFAACFIVLLVVAGLL). Over 1197–1329 (WMIKVRIEAY…TIRQRPNNND (133 aa)) the chain is Cytoplasmic.

It localises to the membrane. The protein is Putative protein tag-53 (tag-53) of Caenorhabditis elegans.